We begin with the raw amino-acid sequence, 268 residues long: Mediator of RNA polymerase II transcription subunit 18 (268 aa).

Positions 91–112 (APASPVADQDAHMSGTDEKSSV) are disordered. Positions 99–112 (QDAHMSGTDEKSSV) are enriched in basic and acidic residues.

The protein belongs to the Mediator complex subunit 18 family. As to quaternary structure, component of the Mediator complex.

The protein resides in the nucleus. Its function is as follows. Component of the Mediator complex, a coactivator involved in the regulated transcription of nearly all RNA polymerase II-dependent genes. Mediator functions as a bridge to convey information from gene-specific regulatory proteins to the basal RNA polymerase II transcription machinery. Mediator is recruited to promoters by direct interactions with regulatory proteins and serves as a scaffold for the assembly of a functional preinitiation complex with RNA polymerase II and the general transcription factors. The polypeptide is Mediator of RNA polymerase II transcription subunit 18 (srb5) (Aspergillus fumigatus (strain ATCC MYA-4609 / CBS 101355 / FGSC A1100 / Af293) (Neosartorya fumigata)).